The sequence spans 186 residues: ADP-ribosylation factor-like protein 8A (186 aa).

The note=Mediates targeting to membranes intramembrane region spans 1 to 19 (MLALFNKLLDWFRALFWKE). Residues 29–35 (QYSGKTT), 71–75 (DIGGQ), and 130–133 (NKRD) contribute to the GTP site.

It belongs to the small GTPase superfamily. Arf family.

It is found in the late endosome membrane. It localises to the lysosome membrane. Its subcellular location is the cytoplasm. The protein resides in the cytoskeleton. The protein localises to the spindle. It is found in the cell projection. It localises to the axon. Its subcellular location is the synapse. Plays a role in lysosome motility. In neurons, mediates the anterograde axonal long-range transport of presynaptic lysosome-related vesicles required for presynaptic biogenesis and synaptic function. May play a role in chromosome segregation. The chain is ADP-ribosylation factor-like protein 8A (ARL8A) from Gallus gallus (Chicken).